Reading from the N-terminus, the 429-residue chain is BURP domain-containing protein 3 (429 aa).

An N-terminal signal peptide occupies residues 1–21 (MDRLLACLLGFLLIASVGSHA). Residues 59–81 (GGGVHVDAGHGKPGGTTVDVGKG) are disordered. A BURP domain is found at 213–428 (FFLEKDLHPG…PQDHVVWTRS (216 aa)).

As to expression, expressed in stems, leaves, shoot, panicles and stamen.

This chain is BURP domain-containing protein 3 (BURP3), found in Oryza sativa subsp. japonica (Rice).